A 2083-amino-acid chain; its full sequence is Nonribosomal peptide synthetase sidD (2083 aa).

The segment at 251–650 (TYRQIDQYSS…GEIESQLRAR (400 aa)) is adenylation 1. In terms of domain architecture, Carrier 1 spans 764-840 (RELSDLERRL…AMASVVRICD (77 aa)). Serine 801 is subject to O-(pantetheine 4'-phosphoryl)serine. The tract at residues 876–1146 (EDIYPCTPTQ…IATVPIRVRI (271 aa)) is condensation 1. Residues 1336–1421 (LSPIGCVGEL…TEIERHLAEH (86 aa)) are adenylation 2. The Carrier 2 domain maps to 1557–1633 (NHLSASESIL…DAARVMKVDE (77 aa)). Serine 1594 is subject to O-(pantetheine 4'-phosphoryl)serine. The segment at 1674–1946 (DVLPVTDSQD…YQLTPVRVPF (273 aa)) is condensation 2.

This sequence belongs to the NRP synthetase family.

Its pathway is siderophore biosynthesis. Its function is as follows. Nonribosomal peptide synthetase; part of the siderophore biosynthetic pathway. Aspergillus fumigatus produces four types of siderophores, low-molecular-mass iron chelators, including excreted fusarinine C (FsC) and triacetylfusarinine C (TAFC) for iron uptake; and intacellular ferricrocin (FC) for hyphal and hydroxyferricrocin (HFC) for conidial iron distribution and storage. TAFC consists of three N(2)-acetyl-N(5)-anhydromevalonyl-N(5)-hydroxyornithine residues cyclically linked by ester bonds; FC is a cyclic hexapeptide with the structure Gly-Ser-Gly-(N(5)-acetyl-N(5)-hydroxyornithine)x3. The biosynthesis of all four siderophores depends on the hydroxylation of ornithine, catalyzed by the monooxygenase sidA. Subsequently, the pathways for biosynthesis of extra- and intracellular siderophores split. For biosynthesis of extracellular siderophores, the transacylase sidF transfers anhydromevalonyl to N(5)-hydroxyornithine. The required anhydromevalonyl-CoA moiety is derived from mevalonate by CoA ligation and dehydration catalyzed by sidI and sidH respectively. The acetylation of N(5)-hydroxyornithine for FC biosynthesis involves the constitutively expressed sidL. FC is hydroxylated to HFC by an as yet uncharacterized enzyme during conidiation. Assembly of fusarinine C (FsC) and FC is catalyzed by two different nonribosomal peptide synthetases (NRPS), sidD and sidC respectively. Subsequently, sidG catalyzes N2-acetylation of FsC for forming TAFC. Both extra- and intracellular siderophores are crucial for growth during iron limitation and virulence. This chain is Nonribosomal peptide synthetase sidD, found in Aspergillus fumigatus (strain ATCC MYA-4609 / CBS 101355 / FGSC A1100 / Af293) (Neosartorya fumigata).